The chain runs to 257 residues: Zinc transporter ZupT (257 aa).

3 helical membrane passes run 5-25 (LILT…GVLG), 32-52 (LLAF…LMEM), and 61-81 (GMSP…YFGL). Positions 120 and 123 each coordinate Fe(2+). Zn(2+) is bound by residues Glu123 and His148. The next 4 membrane-spanning stretches (helical) occupy residues 137–157 (LGFG…LAVA), 171–191 (ILWA…AWLI), 195–215 (MISP…MVAL), and 236–256 (GVLC…TAGI). Fe(2+)-binding residues include Asn149, Glu152, and Glu181. Glu152 serves as a coordination point for Zn(2+).

This sequence belongs to the ZIP transporter (TC 2.A.5) family. ZupT subfamily.

It is found in the cell inner membrane. The enzyme catalyses Zn(2+)(in) = Zn(2+)(out). Functionally, mediates zinc uptake. May also transport other divalent cations. The protein is Zinc transporter ZupT of Escherichia coli O127:H6 (strain E2348/69 / EPEC).